Here is a 428-residue protein sequence, read N- to C-terminus: A-kinase anchor protein 5 (428 aa).

An essential to the intracellular anchoring function region spans residues 1 to 170; it reads MEITVSEIQV…VTKTQTQSDD (170 aa). Disordered stretches follow at residues 1-207 and 237-313; these read MEIT…SPGE and LEEK…TELS. A compositionally biased stretch (basic and acidic residues) spans 10–32; it reads VESKDETRSAEVRPQDERQEEKA. C36 is lipidated: S-palmitoyl cysteine. The segment covering 37–48 has biased composition (basic residues); the sequence is FKRRKKAAKAMK. The span at 57–68 shows a compositional bias: basic and acidic residues; it reads DAAKKCPPEARA. The short motif at 76–96 is the AKAP CaM-binding element; the sequence is GGAWDSIKRLVTRRKRSESSK. A Phosphothreonine; by PKC modification is found at T87. Position 92 is a phosphoserine; by PKA (S92). S94 carries the phosphoserine; by PKC modification. Residue C129 is the site of S-palmitoyl cysteine attachment. The segment covering 133-156 has biased composition (basic and acidic residues); the sequence is SKGEKRSNHSKIIEDSDRSVKVQE. A compositionally biased stretch (polar residues) spans 161–170; the sequence is VTKTQTQSDD. Basic and acidic residues-rich tracts occupy residues 171–191 and 290–311; these read QATK…KGDD and PDWK…KDTE. The interval 389–410 is RII-beta subunit binding domain; the sequence is YETLLIETASSLVKNAIQLSIE. The interval 411–428 is tethers NFATC2 to CRAC channels; that stretch reads QLVNEMASDDNTINNRLQ.

Binding protein for dimer of the RII-beta regulatory subunit of cAMP-dependent protein kinase (PKA) and also for the protein kinase C (PKC) and the phosphatase calcineurin (PP2B). Each enzyme is inhibited when bound to the anchoring protein. Also binds the beta2-adrenergic receptor. Part of a complex containing AKAP5, ADCY5, ADCY6 and PDE4C. Interacts with ADCY8, and enhances its phosphorylation at lipid rafts. Interacts with ORAI1 (isoform alpha) (via N-terminus) upon store depletion and in response to LTC4. Does not interact with ORAI2 and ORAI3 paralogs. Interacts (via leucine zipper domain) with NFATC2/NFAT1. Interacts with calmodulin; the interaction is calcium-independent. Interacts with KCNQ2; the interaction may help KCNQ2 channel complex to retain calcium-bound calmodulin. In terms of processing, palmitoylated. Palmitoylation at Cys-36 and Cys-129 play a key role in the targeting of AKAP5 to lipid rafts. Palmitoylation by ZDHHC2 is required for AKAP5 function in LTP-stimulated recycling endosome exocytosis. As to expression, predominantly in brain, and to a lesser extent in adrenal medulla, lung and anterior pituitary.

It localises to the postsynaptic recycling endosome membrane. Functionally, multivalent scaffold protein that anchors the cAMP-dependent protein kinase/PKA to cytoskeletal and/or organelle-associated proteins, targeting the signal carried by cAMP to specific intracellular effectors. Association with the beta2-adrenergic receptor (beta2-AR) not only regulates beta2-AR signaling pathway, but also the activation by PKA by switching off the beta2-AR signaling cascade. Plays a role in long term synaptic potentiation by regulating protein trafficking from the dendritic recycling endosomes to the plasma membrane and controlling both structural and functional plasticity at excitatory synapses. Associates with ORAI1 pore-forming subunit of CRAC channels in Ca(2+) signaling microdomains where it recruits NFATC2/NFAT1 and couples store-operated Ca(2+) influx to calmodulin and calcineurin signaling and activation of NFAT-dependent transcriptional responses. The chain is A-kinase anchor protein 5 (AKAP5) from Bos taurus (Bovine).